A 308-amino-acid chain; its full sequence is Ornithine carbamoyltransferase (308 aa).

Residues 55–58 (STRT), Gln-82, Arg-106, and 133–136 (HPCQ) each bind carbamoyl phosphate. L-ornithine-binding positions include Asn-164, Asp-227, and 231–232 (SM). Carbamoyl phosphate contacts are provided by residues 267–268 (CL) and Arg-295.

The protein belongs to the aspartate/ornithine carbamoyltransferase superfamily. OTCase family.

Its subcellular location is the cytoplasm. It catalyses the reaction carbamoyl phosphate + L-ornithine = L-citrulline + phosphate + H(+). It participates in amino-acid biosynthesis; L-arginine biosynthesis; L-arginine from L-ornithine and carbamoyl phosphate: step 1/3. Its function is as follows. Reversibly catalyzes the transfer of the carbamoyl group from carbamoyl phosphate (CP) to the N(epsilon) atom of ornithine (ORN) to produce L-citrulline. This Prochlorococcus marinus (strain MIT 9312) protein is Ornithine carbamoyltransferase.